The chain runs to 208 residues: LexA repressor (208 aa).

Residues Val-30 to Ser-50 constitute a DNA-binding region (H-T-H motif). Active-site for autocatalytic cleavage activity residues include Ser-129 and Lys-167.

The protein belongs to the peptidase S24 family. As to quaternary structure, homodimer.

The enzyme catalyses Hydrolysis of Ala-|-Gly bond in repressor LexA.. In terms of biological role, represses a number of genes involved in the response to DNA damage (SOS response), including recA and lexA. In the presence of single-stranded DNA, RecA interacts with LexA causing an autocatalytic cleavage which disrupts the DNA-binding part of LexA, leading to derepression of the SOS regulon and eventually DNA repair. The chain is LexA repressor from Lactobacillus acidophilus (strain ATCC 700396 / NCK56 / N2 / NCFM).